Here is a 410-residue protein sequence, read N- to C-terminus: Elongation factor Tu, chloroplastic (410 aa).

A tr-type G domain is found at 10–215 (KPHVNIGTIG…IVDEYIPTPQ (206 aa)). Positions 19–26 (GHVDHGKT) are G1. GTP is bound at residue 19 to 26 (GHVDHGKT). Thr26 is a binding site for Mg(2+). The tract at residues 61 to 65 (GITIN) is G2. Residues 82-85 (DCPG) are G3. Residues 82-86 (DCPGH) and 137-140 (NKAD) contribute to the GTP site. Residues 137–140 (NKAD) are G4. The interval 175-177 (SAL) is G5.

It belongs to the TRAFAC class translation factor GTPase superfamily. Classic translation factor GTPase family. EF-Tu/EF-1A subfamily.

The protein localises to the plastid. The protein resides in the chloroplast. It carries out the reaction GTP + H2O = GDP + phosphate + H(+). Functionally, GTP hydrolase that promotes the GTP-dependent binding of aminoacyl-tRNA to the A-site of ribosomes during protein biosynthesis. This Cyanidioschyzon merolae (strain NIES-3377 / 10D) (Unicellular red alga) protein is Elongation factor Tu, chloroplastic (tufA).